The primary structure comprises 442 residues: D-serine dehydratase (442 aa).

N6-(pyridoxal phosphate)lysine is present on lysine 118.

Belongs to the serine/threonine dehydratase family. DsdA subfamily. In terms of assembly, monomer. It depends on pyridoxal 5'-phosphate as a cofactor.

The catalysed reaction is D-serine = pyruvate + NH4(+). The sequence is that of D-serine dehydratase from Escherichia coli (strain 55989 / EAEC).